Reading from the N-terminus, the 281-residue chain is Diaminopimelate epimerase (281 aa).

Residues N14 and N65 each contribute to the substrate site. The active-site Proton donor is the C74. Residues 75-76 (GN), N165, N198, and 216-217 (ER) contribute to the substrate site. C225 functions as the Proton acceptor in the catalytic mechanism. Residue 226-227 (GT) coordinates substrate.

This sequence belongs to the diaminopimelate epimerase family. Homodimer.

It is found in the cytoplasm. The catalysed reaction is (2S,6S)-2,6-diaminopimelate = meso-2,6-diaminopimelate. Its pathway is amino-acid biosynthesis; L-lysine biosynthesis via DAP pathway; DL-2,6-diaminopimelate from LL-2,6-diaminopimelate: step 1/1. Catalyzes the stereoinversion of LL-2,6-diaminopimelate (L,L-DAP) to meso-diaminopimelate (meso-DAP), a precursor of L-lysine and an essential component of the bacterial peptidoglycan. The protein is Diaminopimelate epimerase of Leptospira borgpetersenii serovar Hardjo-bovis (strain JB197).